Consider the following 355-residue polypeptide: Probable dual-specificity RNA methyltransferase RlmN 1 (355 aa).

Residue glutamate 91 is the Proton acceptor of the active site. One can recognise a Radical SAM core domain in the interval 99 to 336; the sequence is RADRAAGCLS…THLRRSRGPD (238 aa). Residues cysteine 106 and cysteine 341 are joined by a disulfide bond. [4Fe-4S] cluster contacts are provided by cysteine 113, cysteine 117, and cysteine 120. S-adenosyl-L-methionine-binding positions include 163-164, serine 195, 218-220, and asparagine 294; these read GE and SLH. Residue cysteine 341 is the S-methylcysteine intermediate of the active site.

Belongs to the radical SAM superfamily. RlmN family. [4Fe-4S] cluster is required as a cofactor.

The protein localises to the cytoplasm. The enzyme catalyses adenosine(2503) in 23S rRNA + 2 reduced [2Fe-2S]-[ferredoxin] + 2 S-adenosyl-L-methionine = 2-methyladenosine(2503) in 23S rRNA + 5'-deoxyadenosine + L-methionine + 2 oxidized [2Fe-2S]-[ferredoxin] + S-adenosyl-L-homocysteine. It carries out the reaction adenosine(37) in tRNA + 2 reduced [2Fe-2S]-[ferredoxin] + 2 S-adenosyl-L-methionine = 2-methyladenosine(37) in tRNA + 5'-deoxyadenosine + L-methionine + 2 oxidized [2Fe-2S]-[ferredoxin] + S-adenosyl-L-homocysteine. Its function is as follows. Specifically methylates position 2 of adenine 2503 in 23S rRNA and position 2 of adenine 37 in tRNAs. The sequence is that of Probable dual-specificity RNA methyltransferase RlmN 1 from Opitutus terrae (strain DSM 11246 / JCM 15787 / PB90-1).